Consider the following 285-residue polypeptide: Diphthine methyl ester synthase (285 aa).

Residues Leu-9, Asp-84, Gly-87, 112–113, Leu-163, Val-221, and His-246 contribute to the S-adenosyl-L-methionine site; that span reads SI.

This sequence belongs to the diphthine synthase family.

Its subcellular location is the cytoplasm. The catalysed reaction is 2-[(3S)-amino-3-carboxypropyl]-L-histidyl-[translation elongation factor 2] + 4 S-adenosyl-L-methionine = diphthine methyl ester-[translation elongation factor 2] + 4 S-adenosyl-L-homocysteine + 3 H(+). It functions in the pathway protein modification; peptidyl-diphthamide biosynthesis. Functionally, S-adenosyl-L-methionine-dependent methyltransferase that catalyzes four methylations of the modified target histidine residue in translation elongation factor 2 (EF-2), to form an intermediate called diphthine methyl ester. The four successive methylation reactions represent the second step of diphthamide biosynthesis. The protein is Diphthine methyl ester synthase (dph5) of Emericella nidulans (strain FGSC A4 / ATCC 38163 / CBS 112.46 / NRRL 194 / M139) (Aspergillus nidulans).